The primary structure comprises 610 residues: MENKRNFFITIALSILILALWQVFYLGPKTEAQREQARIEEQQRQAQQAAQNRQASSSTGDTPQMPANPDSIPGQGDTKAAGAPLTRDAAIAQSPRIEIDTPSLRGSINLTGARLDDLYLKKYHETVSDKSPEIELLAPSSLKQGYFVELGFTGNDATGAVPGPNTVWVVEGNNKLTPSTPVTLTYTNDKNLTFKRVISVDDAYMFTVDDTIINNGGSTVSLASYGRVTRFNQPEHASATYVLHEGLIGVMGQDGLQEIKYAKIEDNKDISFKDVIGGWVGITDKYWAATLIPPQDEKFTGRFSHFTNDRPRYQSDLLSAPLTVAPGQSQKIQNRVFAGAKVVNTIQNYETKYHIKQFDLLIDWGWFYFITKPMFYLIDWIYKFTGNFGVAILVVTVLLKALFFPLANKSYKSMARMKLMQPKMTEIREKYADDKMKQQQAMMELYKREKINPLAGCWPVLVQIPVFFALYKVLYVTIEMRHAPFFGWIQDLAAPDPTSIFNLFGLLPYTVPHFLMIGVWPIIMGIIMFLQMRMNPTPPDPTQAAIFTWMPIIFTFMLASFPAGLVIYWAWNNTLSIIQQSVIMKRQGVKIELFDNLKGLFRRKPKEANK.

A helical transmembrane segment spans residues 7–27 (FFITIALSILILALWQVFYLG). The disordered stretch occupies residues 36 to 82 (QARIEEQQRQAQQAAQNRQASSSTGDTPQMPANPDSIPGQGDTKAAG). The segment covering 44 to 55 (RQAQQAAQNRQA) has biased composition (low complexity). Transmembrane regions (helical) follow at residues 358 to 378 (FDLL…FYLI), 387 to 407 (NFGV…FPLA), 458 to 478 (WPVL…YVTI), 510 to 530 (TVPH…IMFL), and 546 to 566 (IFTW…AGLV).

This sequence belongs to the OXA1/ALB3/YidC family. Type 1 subfamily. As to quaternary structure, interacts with the Sec translocase complex via SecD. Specifically interacts with transmembrane segments of nascent integral membrane proteins during membrane integration.

The protein resides in the cell inner membrane. Functionally, required for the insertion and/or proper folding and/or complex formation of integral membrane proteins into the membrane. Involved in integration of membrane proteins that insert both dependently and independently of the Sec translocase complex, as well as at least some lipoproteins. Aids folding of multispanning membrane proteins. This is Membrane protein insertase YidC from Brucella melitensis biotype 1 (strain ATCC 23456 / CCUG 17765 / NCTC 10094 / 16M).